A 147-amino-acid chain; its full sequence is MRLAIMLSATAVAINFATCSAIDQTKVLVYGTPAHYIHDSAGRRLLRKNEENEETSEERAPNFNLANLNEEMFNVAALTKRADAKKLAKQLMGNDKLADAAYIWWQHNRVTLDQIDTFLKLASRKTQGAKYNQIYNSYMMHLGLTGY.

The first 21 residues, M1–A21, serve as a signal peptide directing secretion. The RxLR-dEER signature appears at R44–R59. N6-acetyllysine is present on K48. Positions A77–Y147 are effector domain.

The protein belongs to the RxLR effector family. As to quaternary structure, forms homodimers via the RxLR-dEER motif. Interacts with host E3 ligase CMPG1. Interacts with host DRP2. Post-translationally, proteolytically cleaved. The cleavage site directly after the RxLR sequence and the high conservation among other effector proteins suggest that the RxLR motif might play a crucial role in the intracellular processing before secretion. Glycosylated. In terms of processing, N-acetylated at Lys-48 after cleavage.

It is found in the secreted. It localises to the host cytoplasm. Its subcellular location is the host endosome. Its function is as follows. Multifunctional effector that can suppress host BAK1/SERK3-mediated immunity through at least two different pathways. Manipulates plant immunity by targeting and stabilizing host E3 ligase CMPG1. Preventing the normal 26S proteasome-dependent degradation of potato CMPG1, and thus potentially of its protein substrates in the host cell, further abolishes host cell death during the biotrophic phase of infection. Also associates with the dynamin-related protein 2 (DRP2), a plant GTPase involved in immune receptor-mediated endocytosis. The Avr3A(KI) form is recognized by R3a which triggers R3a-mediated hypersensitivity and suppresses INF1-induced cell death. This chain is RxLR effector protein Avr3a, found in Phytophthora infestans (Potato late blight agent).